Reading from the N-terminus, the 61-residue chain is Short neurotoxin 1 (61 aa).

Cystine bridges form between Cys3-Cys23, Cys17-Cys40, Cys42-Cys53, and Cys54-Cys59.

This sequence belongs to the three-finger toxin family. Short-chain subfamily. Type I alpha-neurotoxin sub-subfamily. In terms of tissue distribution, expressed by the venom gland.

The protein localises to the secreted. Its function is as follows. Binds to muscle nicotinic acetylcholine receptor (nAChR) and inhibit acetylcholine from binding to the receptor, thereby impairing neuromuscular transmission. The protein is Short neurotoxin 1 of Naja annulata annulata (Banded water cobra).